Reading from the N-terminus, the 336-residue chain is Anthranilate phosphoribosyltransferase (336 aa).

5-phospho-alpha-D-ribose 1-diphosphate contacts are provided by residues Gly-79, 82 to 83, Thr-87, 89 to 92, 107 to 115, and Ser-119; these read GD, NISS, and KHGNRSVSS. Position 79 (Gly-79) interacts with anthranilate. A Mg(2+)-binding site is contributed by Ser-91. Asn-110 contributes to the anthranilate binding site. Arg-165 contacts anthranilate. Residues Asp-223 and Glu-224 each contribute to the Mg(2+) site.

Belongs to the anthranilate phosphoribosyltransferase family. In terms of assembly, homodimer. Mg(2+) is required as a cofactor.

The enzyme catalyses N-(5-phospho-beta-D-ribosyl)anthranilate + diphosphate = 5-phospho-alpha-D-ribose 1-diphosphate + anthranilate. It participates in amino-acid biosynthesis; L-tryptophan biosynthesis; L-tryptophan from chorismate: step 2/5. Functionally, catalyzes the transfer of the phosphoribosyl group of 5-phosphorylribose-1-pyrophosphate (PRPP) to anthranilate to yield N-(5'-phosphoribosyl)-anthranilate (PRA). The protein is Anthranilate phosphoribosyltransferase of Tolumonas auensis (strain DSM 9187 / NBRC 110442 / TA 4).